Consider the following 483-residue polypeptide: Altronate oxidoreductase (483 aa).

Ile-18 to Ala-29 serves as a coordination point for NAD(+).

Belongs to the mannitol dehydrogenase family. UxaB subfamily.

It catalyses the reaction D-altronate + NAD(+) = keto-D-tagaturonate + NADH + H(+). It functions in the pathway carbohydrate metabolism; pentose and glucuronate interconversion. This Shigella flexneri serotype 5b (strain 8401) protein is Altronate oxidoreductase.